The chain runs to 65 residues: Omega-lycotoxin-Am1f (65 aa).

A propeptide spanning residues 1-18 (GDEEDEVEETLPVAEEGR) is cleaved from the precursor. Intrachain disulfides connect Cys-22/Cys-37, Cys-29/Cys-42, Cys-36/Cys-62, and Cys-44/Cys-60.

It belongs to the neurotoxin omega-lctx family. Expressed by the venom gland.

The protein resides in the secreted. Functionally, modulates Cav2.1/CACNA1A voltage-gated calcium channels (P/Q-type currents) in rat cerebellar Purkinje cells and hippocampal CA1-CA3 neurons. At saturating concentrations (&gt;10 nM) decelerates activation kinetics and slightly increases peak amplitude without affecting deactivation kinetics. In vivo, does not cause death when intravenously injected into mice. In rat models, through its activity on Cav2.1/CACNA1A, has an ameliorative effect on memory defects provoked by hyperstimulation of N-methyl-D-aspartate receptors (NMDARs) in the hippocampus. This Alopecosa marikovskyi (Wolf spider) protein is Omega-lycotoxin-Am1f.